The sequence spans 375 residues: Proton-coupled zinc antiporter SLC30A8 (375 aa).

Over 1–68 (MKGPEKAYLV…QREQTSAKKK (68 aa)) the chain is Cytoplasmic. His-46, Cys-47, and His-48 together coordinate Zn(2+). The short motif at 46–48 (HCH) is the HCH Motif; seals regulatory zinc-binding pocket element. The chain crosses the membrane as a helical span at residues 69–89 (LCIASLICFVFISAEIVGGYI). The Lumenal, vesicle portion of the chain corresponds to 90 to 98 (AGSLAVVTD). A helical membrane pass occupies residues 99–119 (AAHLLVDLSSFFISLGSLWLS). His-101 and Asp-105 together coordinate Zn(2+). Topologically, residues 120–135 (SKSSTMRLTFGWYRAE) are cytoplasmic. Residues 136–156 (ILGALMSIITIWLVTGVLVYL) traverse the membrane as a helical segment. The Lumenal, vesicle portion of the chain corresponds to 157–170 (AIERIIRPDYTIDG). The helical transmembrane segment at 171–191 (TVMLITSACALGANVVLALIL) threads the bilayer. Residues 192 to 223 (HQSGHGHSHAGGKHEHMASEYKPQTNASIRAA) are Cytoplasmic-facing. A helical transmembrane segment spans residues 224–244 (FIHVIGDLFQSISVLISALII). 2 residues coordinate Zn(2+): His-226 and Asp-230. At 245 to 251 (YFKPEYK) the chain is on the lumenal, vesicle side. A helical transmembrane segment spans residues 252 to 272 (IADPICTFIFSIFVLITTVTV). Topologically, residues 273–375 (LRDLLNILME…ECMFCYEPTQ (103 aa)) are cytoplasmic. Zn(2+) contacts are provided by His-307, His-324, His-351, Glu-358, Cys-367, and Cys-370.

This sequence belongs to the cation diffusion facilitator (CDF) transporter (TC 2.A.4) family. SLC30A subfamily. As to quaternary structure, homodimer.

It is found in the cytoplasmic vesicle. It localises to the secretory vesicle membrane. The protein localises to the cell membrane. The catalysed reaction is Zn(2+)(in) + 2 H(+)(out) = Zn(2+)(out) + 2 H(+)(in). In terms of biological role, proton-coupled zinc ion antiporter mediating the entry of zinc into the lumen of pancreatic beta cell secretory granules, thereby regulating insulin secretion. The polypeptide is Proton-coupled zinc antiporter SLC30A8 (slc30a8) (Xenopus laevis (African clawed frog)).